The primary structure comprises 213 residues: Putative 3-methyladenine DNA glycosylase (213 aa).

The protein belongs to the DNA glycosylase MPG family.

The polypeptide is Putative 3-methyladenine DNA glycosylase (Leifsonia xyli subsp. xyli (strain CTCB07)).